The sequence spans 308 residues: Taste receptor type 2 member 43 (308 aa).

Met1 is a topological domain (extracellular). A helical transmembrane segment spans residues 2–22 (ITFLPIIFSILVVFTFVIGNF). The Cytoplasmic portion of the chain corresponds to 23–46 (ANGFIALVNSIEWVKRQKISFADQ). Residues 47-67 (ILTALAVSRVGLLWILLLNWY) traverse the membrane as a helical segment. The Extracellular portion of the chain corresponds to 68 to 86 (STVLNPAFYSVEVRTIAYN). Residues 87-107 (LWAVINHFSNWLATSLSIFYL) form a helical membrane-spanning segment. The Cytoplasmic segment spans residues 108–126 (LKIANFSNLIFLHLRRRVK). A helical transmembrane segment spans residues 127–147 (SVVLVILWGPLLFLVCHLFVV). Over 148–178 (NMNEIIQTKEYEGNMTWKSKLRSAMYLSNTT) the chain is Extracellular. N-linked (GlcNAc...) asparagine glycans are attached at residues Asn161 and Asn176. The chain crosses the membrane as a helical span at residues 179 to 199 (VTILANLVPFILTLISFLLLI). The Cytoplasmic segment spans residues 200 to 229 (CSLCKHLKKMQLRDKGSQDPSTKVHIKALQ). The helical transmembrane segment at 230-249 (TVISLSLCAIYFLSIMISSW) threads the bilayer. Residues 250–258 (SLGRVENKA) lie on the Extracellular side of the membrane. A helical membrane pass occupies residues 259-279 (IFMFCKAIRFSYPSAHAFILI). Topologically, residues 280–308 (WGNKKLKQTLLSVLWNVRYCVKGQKLQSP) are cytoplasmic.

Belongs to the G-protein coupled receptor T2R family.

The protein resides in the membrane. It localises to the cell projection. The protein localises to the cilium membrane. Functionally, gustducin-coupled receptor immplicated in the perception of bitter compounds in the oral cavity and the gastrointestinal tract. Signals through PLCB2 and the calcium-regulated cation channel TRPM5. Activated by the sulfonyl amide sweeteners saccharin and acesulfame K. In airway epithelial cells, binding of bitter compounds increases the intracellular calcium ion concentration and stimulates ciliary beat frequency. May act as chemosensory receptors in airway epithelial cells to detect and eliminate potential noxious agents from the airways. In Macaca mulatta (Rhesus macaque), this protein is Taste receptor type 2 member 43 (TAS2R43).